The sequence spans 216 residues: Octanoyltransferase (216 aa).

A BPL/LPL catalytic domain is found at 33-216 (AQTADELWIV…AEKLTRHLSG (184 aa)). Substrate contacts are provided by residues 72–79 (RGGEVTYH), 148–150 (ALG), and 162–164 (GVS). The active-site Acyl-thioester intermediate is the cysteine 180.

This sequence belongs to the LipB family.

Its subcellular location is the cytoplasm. The catalysed reaction is octanoyl-[ACP] + L-lysyl-[protein] = N(6)-octanoyl-L-lysyl-[protein] + holo-[ACP] + H(+). Its pathway is protein modification; protein lipoylation via endogenous pathway; protein N(6)-(lipoyl)lysine from octanoyl-[acyl-carrier-protein]: step 1/2. In terms of biological role, catalyzes the transfer of endogenously produced octanoic acid from octanoyl-acyl-carrier-protein onto the lipoyl domains of lipoate-dependent enzymes. Lipoyl-ACP can also act as a substrate although octanoyl-ACP is likely to be the physiological substrate. The polypeptide is Octanoyltransferase (Herminiimonas arsenicoxydans).